A 149-amino-acid chain; its full sequence is Probable cyclic pyranopterin monophosphate synthase (149 aa).

Substrate-binding positions include 67 to 69 (LCH) and 103 to 104 (ME). Aspartate 118 is an active-site residue.

It belongs to the MoaC family. In terms of assembly, homohexamer; trimer of dimers.

The catalysed reaction is (8S)-3',8-cyclo-7,8-dihydroguanosine 5'-triphosphate = cyclic pyranopterin phosphate + diphosphate. The protein operates within cofactor biosynthesis; molybdopterin biosynthesis. Functionally, catalyzes the conversion of (8S)-3',8-cyclo-7,8-dihydroguanosine 5'-triphosphate to cyclic pyranopterin monophosphate (cPMP). This is Probable cyclic pyranopterin monophosphate synthase from Saccharolobus solfataricus (strain ATCC 35092 / DSM 1617 / JCM 11322 / P2) (Sulfolobus solfataricus).